Consider the following 769-residue polypeptide: Major inner protein P1 (769 aa).

Homodimer. Associates with the polymerase complex.

Its subcellular location is the virion. P1 is the major inner capsid (core) protein of the polyhedral procapsid, which is responsible for genomic replication and transcription. Forms a dodecahedral shell from 60 asymmetric dimers. Binds to RNA and may be involved in genomic packaging. This Pseudomonas phage phi6 (Bacteriophage phi-6) protein is Major inner protein P1 (P1).